The chain runs to 158 residues: Cyclic pyranopterin monophosphate synthase (158 aa).

Residues 75–77 and 113–114 contribute to the substrate site; these read LCH and ME. Asp128 is a catalytic residue.

This sequence belongs to the MoaC family. As to quaternary structure, homohexamer; trimer of dimers.

The catalysed reaction is (8S)-3',8-cyclo-7,8-dihydroguanosine 5'-triphosphate = cyclic pyranopterin phosphate + diphosphate. Its pathway is cofactor biosynthesis; molybdopterin biosynthesis. Catalyzes the conversion of (8S)-3',8-cyclo-7,8-dihydroguanosine 5'-triphosphate to cyclic pyranopterin monophosphate (cPMP). The sequence is that of Cyclic pyranopterin monophosphate synthase from Pasteurella multocida (strain Pm70).